Consider the following 228-residue polypeptide: uncharacterized protein (228 aa).

4 helical membrane passes run 37-54 (WCMHASLTLVLLALTLIV), 67-89 (VVSIYLAFFFSLKILHTFFSTGV), 104-126 (HIGIRLFLLLCASSLFYACTSRL), and 138-160 (VLHVRSTAYTTPCAVYVMMLVLY).

It is found in the cell membrane. This is an uncharacterized protein from Treponema pallidum (strain Nichols).